Reading from the N-terminus, the 234-residue chain is (5-formylfuran-3-yl)methyl phosphate synthase (234 aa).

The Schiff-base intermediate with substrate role is filled by K27. The active-site Proton acceptor is K85.

It belongs to the MfnB family.

It carries out the reaction 2 D-glyceraldehyde 3-phosphate = 4-(hydroxymethyl)-2-furancarboxaldehyde phosphate + phosphate + 2 H2O. The protein operates within cofactor biosynthesis; methanofuran biosynthesis. Catalyzes the formation of 4-(hydroxymethyl)-2-furancarboxaldehyde phosphate (4-HFC-P) from two molecules of glyceraldehyde-3-P (GA-3-P). The sequence is that of (5-formylfuran-3-yl)methyl phosphate synthase from Methanosarcina acetivorans (strain ATCC 35395 / DSM 2834 / JCM 12185 / C2A).